The primary structure comprises 654 residues: U-box domain-containing protein 12 (654 aa).

One can recognise a U-box domain in the interval 255-329 (IPPEEFRCPI…AQWCESNGIE (75 aa)). Residues 329-352 (EPPKRPNISQPSSKASSSSSAPDD) are disordered. Over residues 337–349 (SQPSSKASSSSSA) the composition is skewed to low complexity. 5 ARM repeats span residues 387-427 (NHNR…NLSI), 430-469 (ENKG…SLSV), 471-510 (DENK…NLCI), 512-551 (QGNK…ILSS), and 553-592 (PDGK…HLCS).

The enzyme catalyses S-ubiquitinyl-[E2 ubiquitin-conjugating enzyme]-L-cysteine + [acceptor protein]-L-lysine = [E2 ubiquitin-conjugating enzyme]-L-cysteine + N(6)-ubiquitinyl-[acceptor protein]-L-lysine.. Its pathway is protein modification; protein ubiquitination. Its function is as follows. Functions as an E3 ubiquitin ligase. This chain is U-box domain-containing protein 12 (PUB12), found in Arabidopsis thaliana (Mouse-ear cress).